Consider the following 223-residue polypeptide: Cytotoxic T-lymphocyte protein 4 (223 aa).

Residues 1 to 35 (MAGFGFRRHGVQPDLASRTWPCTALFSLLFIPVFS) form the signal peptide. Residues 36-161 (KGMHAAQPAV…IDPEPCPDSD (126 aa)) lie on the Extracellular side of the membrane. The 102-residue stretch at 39-140 (HAAQPAVVLA…VELMYPPPYY (102 aa)) folds into the Ig-like V-type domain. Residues 46–50 (VLASS) form a homodimerization region. 2 disulfides stabilise this stretch: C58–C129 and C85–C103. Residue N113 is glycosylated (N-linked (GlcNAc...) asparagine). The segment at 134-139 (MYPPPY) is important for interaction with CD80 and CD86. An N-linked (GlcNAc...) asparagine glycan is attached at N145. The segment at 150–155 (YVIDPE) is homodimerization. A helical membrane pass occupies residues 162–182 (FLLWILAAVSSGLFFYSFLIT). At 183–223 (AVSLSKMLKKRSPLTTGVYVKMPPTGPECEKQFQPYFIPIN) the chain is on the cytoplasmic side. Position 201 is a phosphotyrosine; by TXK and JAK2 (Y201).

In terms of assembly, homodimer; disulfide-linked. Binds to CD80/B7-1 and CD86/B7.2. Interacts with ICOSLG. N-glycosylation is important for dimerization. Post-translationally, phosphorylation at Tyr-201 prevents binding to the AP-2 adapter complex, blocks endocytosis, and leads to retention of CTLA4 on the cell surface.

It is found in the cell membrane. In terms of biological role, inhibitory receptor acting as a major negative regulator of T-cell responses. The affinity of CTLA4 for its natural B7 family ligands, CD80 and CD86, is considerably stronger than the affinity of their cognate stimulatory coreceptor CD28. The sequence is that of Cytotoxic T-lymphocyte protein 4 (CTLA4) from Canis lupus familiaris (Dog).